The following is a 154-amino-acid chain: Cyanate hydratase (154 aa).

Catalysis depends on residues Arg-100, Glu-103, and Ser-126.

This sequence belongs to the cyanase family.

The enzyme catalyses cyanate + hydrogencarbonate + 3 H(+) = NH4(+) + 2 CO2. In terms of biological role, catalyzes the reaction of cyanate with bicarbonate to produce ammonia and carbon dioxide. The protein is Cyanate hydratase of Aspergillus clavatus (strain ATCC 1007 / CBS 513.65 / DSM 816 / NCTC 3887 / NRRL 1 / QM 1276 / 107).